The following is a 453-amino-acid chain: Maltotriose-binding protein (453 aa).

Positions 1–29 (MKRGIYAVLLVGVLIFSVVASGCIGGTQT) are cleaved as a signal peptide. A compositionally biased stretch (low complexity) spans 27 to 65 (TQTQTETQTPEKTQTPTTTQPSPTTTTSPTQTTSQTPTE). Residues 27–73 (TQTQTETQTPEKTQTPTTTQPSPTTTTSPTQTTSQTPTETETHTQEA) form a disordered region.

This sequence belongs to the bacterial solute-binding protein 1 family.

In terms of biological role, involved in an abc transport system for maltotriose. This chain is Maltotriose-binding protein (malE), found in Pyrococcus abyssi (strain GE5 / Orsay).